Consider the following 195-residue polypeptide: dCTP deaminase (195 aa).

Residues 110–115, D128, 136–138, Y171, K178, and Q182 each bind dCTP; these read RSSLAR and VLE. E138 acts as the Proton donor/acceptor in catalysis. Residues 169–179 are compositionally biased toward basic and acidic residues; it reads RPYSSRKDAKY. A disordered region spans residues 169–195; the sequence is RPYSSRKDAKYKNQQSAVASRIDEDKE.

It belongs to the dCTP deaminase family. In terms of assembly, homotrimer.

It catalyses the reaction dCTP + H2O + H(+) = dUTP + NH4(+). Its pathway is pyrimidine metabolism; dUMP biosynthesis; dUMP from dCTP (dUTP route): step 1/2. In terms of biological role, catalyzes the deamination of dCTP to dUTP. This chain is dCTP deaminase, found in Haemophilus influenzae (strain 86-028NP).